Reading from the N-terminus, the 538-residue chain is Endoglucanase 16 (538 aa).

Residues 1–26 (MRWRRVGDVVAVALLLGAAAAAAAAA) form the signal peptide. The active-site Nucleophile is aspartate 83. Active-site residues include histidine 431, aspartate 483, and glutamate 492. Positions 513–538 (RQESPSTTTTTTATTSSPEMGLSVNR) are disordered. Over residues 516-530 (SPSTTTTTTATTSSP) the composition is skewed to low complexity.

Belongs to the glycosyl hydrolase 9 (cellulase E) family.

Its subcellular location is the secreted. It carries out the reaction Endohydrolysis of (1-&gt;4)-beta-D-glucosidic linkages in cellulose, lichenin and cereal beta-D-glucans.. This chain is Endoglucanase 16, found in Oryza sativa subsp. japonica (Rice).